We begin with the raw amino-acid sequence, 187 residues long: Phosphatidylethanolamine-binding protein 1 (187 aa).

2 positions are modified to phosphoserine: S6 and S13. T42 bears the Phosphothreonine mark. A phosphoserine mark is found at S52, S54, S98, and S153. The tract at residues 93 to 134 (KGNDISSGTVLSDYVGSGPPKGTGLHRYVWLVYEQARPLKCD) is interaction with RAF1.

The protein belongs to the phosphatidylethanolamine-binding protein family. As to quaternary structure, has a tendency to form dimers by disulfide cross-linking. Interacts with RAF1 and this interaction is enhanced if RAF1 is phosphorylated on residues 'Ser-338', 'Ser-339', 'Tyr-340' and 'Tyr-341'. Interacts with ALOX15; in response to IL13/interleukin-13, prevents the interaction of PEBP1 with RAF1 to activate the ERK signaling cascade.

It is found in the cytoplasm. In terms of biological role, binds ATP, opioids and phosphatidylethanolamine. Has lower affinity for phosphatidylinositol and phosphatidylcholine. Serine protease inhibitor which inhibits thrombin, neuropsin and chymotrypsin but not trypsin, tissue type plasminogen activator and elastase. Inhibits the kinase activity of RAF1 by inhibiting its activation and by dissociating the RAF1/MEK complex and acting as a competitive inhibitor of MEK phosphorylation. Functionally, HCNP may be involved in the function of the presynaptic cholinergic neurons of the central nervous system. HCNP increases the production of choline acetyltransferase but not acetylcholinesterase. Seems to be mediated by a specific receptor. The polypeptide is Phosphatidylethanolamine-binding protein 1 (PEBP1) (Macaca fascicularis (Crab-eating macaque)).